Here is a 563-residue protein sequence, read N- to C-terminus: Dihydroxy-acid dehydratase (563 aa).

Asp79 is a binding site for Mg(2+). Cys120 is a [2Fe-2S] cluster binding site. 2 residues coordinate Mg(2+): Asp121 and Lys122. Lys122 carries the post-translational modification N6-carboxylysine. Residue Cys193 coordinates [2Fe-2S] cluster. Position 451 (Glu451) interacts with Mg(2+). Ser477 serves as the catalytic Proton acceptor.

Belongs to the IlvD/Edd family. In terms of assembly, homodimer. It depends on [2Fe-2S] cluster as a cofactor. The cofactor is Mg(2+).

The catalysed reaction is (2R)-2,3-dihydroxy-3-methylbutanoate = 3-methyl-2-oxobutanoate + H2O. It catalyses the reaction (2R,3R)-2,3-dihydroxy-3-methylpentanoate = (S)-3-methyl-2-oxopentanoate + H2O. It functions in the pathway amino-acid biosynthesis; L-isoleucine biosynthesis; L-isoleucine from 2-oxobutanoate: step 3/4. The protein operates within amino-acid biosynthesis; L-valine biosynthesis; L-valine from pyruvate: step 3/4. Its function is as follows. Functions in the biosynthesis of branched-chain amino acids. Catalyzes the dehydration of (2R,3R)-2,3-dihydroxy-3-methylpentanoate (2,3-dihydroxy-3-methylvalerate) into 2-oxo-3-methylpentanoate (2-oxo-3-methylvalerate) and of (2R)-2,3-dihydroxy-3-methylbutanoate (2,3-dihydroxyisovalerate) into 2-oxo-3-methylbutanoate (2-oxoisovalerate), the penultimate precursor to L-isoleucine and L-valine, respectively. This chain is Dihydroxy-acid dehydratase, found in Sulfurovum sp. (strain NBC37-1).